The following is a 109-amino-acid chain: Sperm-specific class P protein 16 (109 aa).

Positions 2 to 109 (SLTADPPACT…TVTIPMSATA (108 aa)) constitute an MSP domain.

Expressed at higher level in testis.

In Caenorhabditis elegans, this protein is Sperm-specific class P protein 16 (ssp-16).